We begin with the raw amino-acid sequence, 1568 residues long: MKKLYLLYLLASFTTVISKEVTGVFNQFNSLIWSYTYRARYEEISTLTAKAQLEWALDGTIASPGDTFTLVMPCVYKFMTYETSVQLTANSIAYATCDFDAGEDTKSFSSLKCTVTDELTEDTSVFGSVILPIAFNVGGSGSKSTITDSKCFSSGYNTVTFFDGNNQLSTTANFLPRRELAFGLVVSQRLSMSLDTMTNFVMSTPCFMGYQSGKLGFTSNDDDFEIDCSSIHVGITNEINDWSMPVSSVPFDHTIRCTSRALYIEFKTIPAGYRPFVDAIVQIPTTEPFFVKYTNEFACVNGIYTSIPFTSFFSQPILYDEALAIGADLVRTTSTVIGSITRTTTLPFISRLQKTKTILVLEPIPTTTVTTSHHGFDTWYYTKKATIGDTATVFIDVPQHTATTLTTYWQESSTATTTYFDDIDLVDTVIVKIPYPNPTIITTQFWSGKYLTTETHKEPPLGTDSVIIKEPHNPTVTTTEFWSESFATTETITNNPEGTDSVIIKEPHNPTVTTTKFWSESFATTETITTGPLGTDSIVIHDPLEESSSSTAIESSDSNISSSAQDSSSSVEQSFTSADETSSIVELSSSSDIPSSSIGLTSSESSTVSSYDSYSSSTSESSIASSYDSYSSSSIESSTLSSSDRYSSSISDTTSFWDSSSSDLESTSITWSSSIDAQSSHLVQSVSNSISTSQEISSSSSEESSTSATDALVSSDASSILSSDTSSYYPSSTISPSDDFPHTIAGESDSQSFSFITSTVEISSDSVSLTSDPASSFDSSSRLNSDSSSSPSTDQRDILTSSSFSTLIKSSESRESSSGTILSEESSDSIPTTFSTRYWSPSGMSSRHYTNSTETSVSDVVSSSVAGDETSESSVSVTSESSESVTSESVASESVTSESVTAVSDISDLYTTSEEVSTSDSNSGMSSPIPSSEQRSSIPIMSSSDESSESRESSIGTILSEESSDSIPTTFSTRYWSPSGMSSRHYTNSTETSVSDVVSSSVAGDETSESSVSVISESSESVTSESVASESVTAVSDISDLYTTSEVVSTSDSKIVPSTSVPSSEQRSSIPIMSSSDESSESRESSSGTILSEENSDSIPTTFSTRYVSVSLTVGELSALPSLPGKLSHLPSSLSETSIGMTKSANLSPQFFSTSVDSALSYWASGSSSADHQSSATCDVSESSVEGNLSAMALGMSNSDDGLSEDTRSSSVAGKEEIELTSTNSVGEITLISYSSSSPTTHDHGRVSKSMGAAPLSSLFSVSVHAPLVTGLSDSDTFPSENSNRSRSFKESTDNTISISRESLGNPYSSISSPSDYDVKSFTTSRELVSSESILPFSDVMDANDMPTSGSNLHSMVFSISVLGEKFNANIEKHKNTNGHYSSMVFTYQSAGLEESDQRIAVTNTKFDQNKIDTTIDSNTFVTSLPFATTLNDQIDQAVPIKIPASSTAGFVSDVLKPDYSKSVQAESVQTDSTTYSEMMSSKRNKNSGFGTSSLNLKPTITVVTKSIDTKVNTMKEGGVSKQVSTTVTEQYDTSTYTPASLLVSDNSGSVSKYSLWMMAFYMLFGLF.

Positions 1–18 are cleaved as a signal peptide; sequence MKKLYLLYLLASFTTVIS. 4 cysteine pairs are disulfide-bonded: cysteine 74/cysteine 151, cysteine 97/cysteine 113, cysteine 206/cysteine 299, and cysteine 228/cysteine 257. ALS repeat units lie at residues 403 to 434, 441 to 471, 476 to 507, and 512 to 543; these read TTLT…VKIP, ITTQ…IKEP, VTTT…IKEP, and VTTT…IHDP. Disordered stretches follow at residues 546–662, 721–743, and 767–832; these read ESSS…SSSS, LSSD…FPHT, and VSLT…SIPT. 4 stretches are compositionally biased toward low complexity: residues 547-662, 721-738, 768-793, and 801-824; these read SSSS…SSSS, LSSD…SPSD, SLTS…SPST, and SSSF…ILSE. Asparagine 559 is a glycosylation site (N-linked (GlcNAc...) asparagine). N-linked (GlcNAc...) asparagine glycosylation occurs at asparagine 851. 2 disordered regions span residues 860–1030 and 1046–1097; these read VVSS…VASE and EVVS…ENSD. The span at 872-904 shows a compositional bias: low complexity; the sequence is ESSVSVTSESSESVTSESVASESVTSESVTAVS. A compositionally biased stretch (polar residues) spans 909-918; it reads LYTTSEEVST. Residues 919 to 945 show a composition bias toward low complexity; it reads SDSNSGMSSPIPSSEQRSSIPIMSSSD. Positions 956–992 are enriched in polar residues; the sequence is GTILSEESSDSIPTTFSTRYWSPSGMSSRHYTNSTET. Asparagine 988 carries N-linked (GlcNAc...) asparagine glycosylation. Composition is skewed to low complexity over residues 993–1002 and 1009–1030; these read SVSDVVSSSV and ESSV…VASE. Residues 1046-1062 show a composition bias toward polar residues; sequence EVVSTSDSKIVPSTSVP. The span at 1063-1077 shows a compositional bias: low complexity; that stretch reads SSEQRSSIPIMSSSD. An N-linked (GlcNAc...) asparagine glycan is attached at asparagine 1188. Disordered stretches follow at residues 1194-1220 and 1271-1305; these read LGMS…EIEL and GLSD…ESLG. Polar residues-rich tracts occupy residues 1272–1286 and 1294–1303; these read LSDS…SNRS and DNTISISRES. Asparagine 1284 carries N-linked (GlcNAc...) asparagine glycosylation. Serine 1548 carries the GPI-anchor amidated serine lipid modification. The propeptide at 1549-1568 is removed in mature form; the sequence is GSVSKYSLWMMAFYMLFGLF.

The protein belongs to the ALS family. Post-translationally, the GPI-anchor is attached to the protein in the endoplasmic reticulum and serves to target the protein to the cell surface. There, the glucosamine-inositol phospholipid moiety is cleaved off and the GPI-modified mannoprotein is covalently attached via its lipidless GPI glycan remnant to the 1,6-beta-glucan of the outer cell wall layer.

The protein localises to the cell membrane. Its subcellular location is the secreted. It localises to the cell wall. Functionally, cell surface adhesion protein which mediates both yeast-to-host tissue adherence and yeast aggregation. Plays an important role in the pathogenesis of C.albicans infections. The chain is Agglutinin-like protein 7 (ALS7) from Candida albicans (strain SC5314 / ATCC MYA-2876) (Yeast).